A 135-amino-acid polypeptide reads, in one-letter code: Biglycan (135 aa).

5 LRR repeats span residues 4 to 24 (KLNY…DLPE), 25 to 46 (TLNE…DLLR), 49 to 72 (KLYR…SFLP), 73 to 95 (TLRE…PDLK), and 96 to 117 (LLQV…DFCP). N-linked (GlcNAc...) asparagine glycosylation is present at Asn65. Residue Asn106 is glycosylated (N-linked (GlcNAc...) asparagine).

Belongs to the small leucine-rich proteoglycan (SLRP) family. SLRP class I subfamily. Homodimer. Forms a ternary complex with MFAP2 and ELN. In terms of processing, the two attached glycosaminoglycan chains can be either chondroitin sulfate or dermatan sulfate. Found in several connective tissues, especially in articular cartilages.

The protein localises to the secreted. The protein resides in the extracellular space. It is found in the extracellular matrix. Its function is as follows. May be involved in collagen fiber assembly. This Oryctolagus cuniculus (Rabbit) protein is Biglycan (BGN).